Here is a 60-residue protein sequence, read N- to C-terminus: Large ribosomal subunit protein uL30 (60 aa).

Belongs to the universal ribosomal protein uL30 family. As to quaternary structure, part of the 50S ribosomal subunit.

The sequence is that of Large ribosomal subunit protein uL30 from Histophilus somni (strain 2336) (Haemophilus somnus).